Consider the following 939-residue polypeptide: Isoleucine--tRNA ligase (939 aa).

A 'HIGH' region motif is present at residues proline 58–histidine 68. Glutamate 574 is a binding site for L-isoleucyl-5'-AMP. The short motif at lysine 615–serine 619 is the 'KMSKS' region element. Residue lysine 618 participates in ATP binding. Zn(2+) contacts are provided by cysteine 902, cysteine 905, cysteine 922, and cysteine 925.

The protein belongs to the class-I aminoacyl-tRNA synthetase family. IleS type 1 subfamily. As to quaternary structure, monomer. Requires Zn(2+) as cofactor.

The protein localises to the cytoplasm. The catalysed reaction is tRNA(Ile) + L-isoleucine + ATP = L-isoleucyl-tRNA(Ile) + AMP + diphosphate. Catalyzes the attachment of isoleucine to tRNA(Ile). As IleRS can inadvertently accommodate and process structurally similar amino acids such as valine, to avoid such errors it has two additional distinct tRNA(Ile)-dependent editing activities. One activity is designated as 'pretransfer' editing and involves the hydrolysis of activated Val-AMP. The other activity is designated 'posttransfer' editing and involves deacylation of mischarged Val-tRNA(Ile). The protein is Isoleucine--tRNA ligase of Aromatoleum aromaticum (strain DSM 19018 / LMG 30748 / EbN1) (Azoarcus sp. (strain EbN1)).